Consider the following 382-residue polypeptide: Queuine tRNA-ribosyltransferase (382 aa).

D96 serves as the catalytic Proton acceptor. Residues 96–100 (DSGGF), D151, Q194, and G221 contribute to the substrate site. Positions 252–258 (GVGAPDS) are RNA binding. D271 serves as the catalytic Nucleophile. The segment at 276–280 (TRIAR) is RNA binding; important for wobble base 34 recognition. Residues C309, C311, C314, and H340 each contribute to the Zn(2+) site.

This sequence belongs to the queuine tRNA-ribosyltransferase family. Homodimer. Within each dimer, one monomer is responsible for RNA recognition and catalysis, while the other monomer binds to the replacement base PreQ1. Requires Zn(2+) as cofactor.

It carries out the reaction 7-aminomethyl-7-carbaguanine + guanosine(34) in tRNA = 7-aminomethyl-7-carbaguanosine(34) in tRNA + guanine. Its pathway is tRNA modification; tRNA-queuosine biosynthesis. In terms of biological role, catalyzes the base-exchange of a guanine (G) residue with the queuine precursor 7-aminomethyl-7-deazaguanine (PreQ1) at position 34 (anticodon wobble position) in tRNAs with GU(N) anticodons (tRNA-Asp, -Asn, -His and -Tyr). Catalysis occurs through a double-displacement mechanism. The nucleophile active site attacks the C1' of nucleotide 34 to detach the guanine base from the RNA, forming a covalent enzyme-RNA intermediate. The proton acceptor active site deprotonates the incoming PreQ1, allowing a nucleophilic attack on the C1' of the ribose to form the product. After dissociation, two additional enzymatic reactions on the tRNA convert PreQ1 to queuine (Q), resulting in the hypermodified nucleoside queuosine (7-(((4,5-cis-dihydroxy-2-cyclopenten-1-yl)amino)methyl)-7-deazaguanosine). This chain is Queuine tRNA-ribosyltransferase, found in Lactococcus lactis subsp. cremoris (strain MG1363).